The sequence spans 481 residues: Glutamate--tRNA ligase 2 (481 aa).

Residues 17-27 carry the 'HIGH' region motif; that stretch reads PSPTGFLHIGG. Positions 118 to 139 are enriched in basic and acidic residues; sequence AEQRAKKQPQRYDGRWRDRDPS. Residues 118 to 143 form a disordered region; it reads AEQRAKKQPQRYDGRWRDRDPSEAPA. The 'KMSKS' region motif lies at 246–250; that stretch reads KLSKR. ATP is bound at residue lysine 249.

It belongs to the class-I aminoacyl-tRNA synthetase family. Glutamate--tRNA ligase type 1 subfamily. As to quaternary structure, monomer.

The protein localises to the cytoplasm. The enzyme catalyses tRNA(Glu) + L-glutamate + ATP = L-glutamyl-tRNA(Glu) + AMP + diphosphate. Functionally, catalyzes the attachment of glutamate to tRNA(Glu) in a two-step reaction: glutamate is first activated by ATP to form Glu-AMP and then transferred to the acceptor end of tRNA(Glu). This is Glutamate--tRNA ligase 2 from Zymomonas mobilis subsp. mobilis (strain ATCC 31821 / ZM4 / CP4).